The primary structure comprises 406 residues: Isocitrate dehydrogenase [NADP] (406 aa).

Positions 72, 75, 77, and 82 each coordinate NADP(+). The D-threo-isocitrate site is built by serine 94, asparagine 96, arginine 100, glutamate 110, and arginine 132. The Mn(2+) site is built by aspartate 250, aspartate 273, and aspartate 277. The NADP(+) site is built by glycine 308, threonine 309, valine 310, histidine 313, and asparagine 326.

It belongs to the isocitrate and isopropylmalate dehydrogenases family. As to quaternary structure, homodimer. It depends on Mg(2+) as a cofactor. Mn(2+) serves as cofactor.

It carries out the reaction D-threo-isocitrate + NADP(+) = 2-oxoglutarate + CO2 + NADPH. Functionally, catalyzes the oxidative decarboxylation of isocitrate to 2-oxoglutarate and carbon dioxide with the concomitant reduction of NADP(+). In Sphingobium yanoikuyae (Sphingomonas yanoikuyae), this protein is Isocitrate dehydrogenase [NADP] (icd).